The following is a 411-amino-acid chain: MSDSVILALGIAAFTVIVLVLVAIILFAKSKLVDSGDITIDINDDPEKAITLPAGGKLLGALASKGIFVSSACGGGGSCGQCIVKVKNGGGEILPTELSHINKREAKEGYRLACQVNVKGNMEVELPEEIFGVKKWECTVISNDNKATFIKELKLAIPEGEEVPFRAGGYIQIEAEPHVVNYKDFDIPEEYHEDWDKYDLWRYVSKVDEHIIRAYSMASYPEEKGIIMLNVRIATPPPRQPDAPPGQMSSYIWSLKAGDKVTISGPFGEFFAKETDAEMVFIGGGAGMAPMRSHIFDQLKRLHSKRKMSFWYGARSKREIFYQEDFDQLQAENPNFVWHVALSDALPEDNWTGYTGFIHNVLYENYLKNHEAPEDCEYYMCGPPVMNAAVIKMLKDLGVEDENILLDDFGG.

A helical transmembrane segment spans residues 5-25 (VILALGIAAFTVIVLVLVAII). The region spanning 36–130 (GDITIDINDD…NMEVELPEEI (95 aa)) is the 2Fe-2S ferredoxin-type domain. Residues cysteine 73, cysteine 79, cysteine 82, and cysteine 114 each coordinate [2Fe-2S] cluster. One can recognise an FAD-binding FR-type domain in the interval 133–273 (VKKWECTVIS…SGPFGEFFAK (141 aa)). The tract at residues 276–393 (DAEMVFIGGG…PVMNAAVIKM (118 aa)) is catalytic.

Belongs to the NqrF family. In terms of assembly, composed of six subunits; NqrA, NqrB, NqrC, NqrD, NqrE and NqrF. It depends on [2Fe-2S] cluster as a cofactor. FAD serves as cofactor.

The protein localises to the cell inner membrane. It carries out the reaction a ubiquinone + n Na(+)(in) + NADH + H(+) = a ubiquinol + n Na(+)(out) + NAD(+). In terms of biological role, NQR complex catalyzes the reduction of ubiquinone-1 to ubiquinol by two successive reactions, coupled with the transport of Na(+) ions from the cytoplasm to the periplasm. The first step is catalyzed by NqrF, which accepts electrons from NADH and reduces ubiquinone-1 to ubisemiquinone by a one-electron transfer pathway. The chain is Na(+)-translocating NADH-quinone reductase subunit F from Haemophilus influenzae (strain ATCC 51907 / DSM 11121 / KW20 / Rd).